We begin with the raw amino-acid sequence, 171 residues long: AAF/I fimbrial subunit (171 aa).

The signal sequence occupies residues 1 to 28 (MKTLKNMRRKNLCITLGLVSLLSRGANA).

It is found in the fimbrium. The protein is AAF/I fimbrial subunit (aggA) of Escherichia coli.